We begin with the raw amino-acid sequence, 429 residues long: Adenylosuccinate synthetase (429 aa).

GTP is bound by residues 12–18 (GDEGKGK) and 40–42 (GHT). Aspartate 13 (proton acceptor) is an active-site residue. Aspartate 13 and glycine 40 together coordinate Mg(2+). Residues 13–16 (DEGK), 38–41 (NAGH), threonine 128, arginine 142, glutamine 223, threonine 238, and arginine 302 each bind IMP. Histidine 41 serves as the catalytic Proton donor. A substrate-binding site is contributed by 298–304 (VNTGRPR). GTP contacts are provided by residues arginine 304, 330–332 (KLD), and 412–414 (GVG).

The protein belongs to the adenylosuccinate synthetase family. As to quaternary structure, homodimer. It depends on Mg(2+) as a cofactor.

It localises to the cytoplasm. The enzyme catalyses IMP + L-aspartate + GTP = N(6)-(1,2-dicarboxyethyl)-AMP + GDP + phosphate + 2 H(+). It participates in purine metabolism; AMP biosynthesis via de novo pathway; AMP from IMP: step 1/2. Plays an important role in the de novo pathway of purine nucleotide biosynthesis. Catalyzes the first committed step in the biosynthesis of AMP from IMP. The chain is Adenylosuccinate synthetase from Pseudarthrobacter chlorophenolicus (strain ATCC 700700 / DSM 12829 / CIP 107037 / JCM 12360 / KCTC 9906 / NCIMB 13794 / A6) (Arthrobacter chlorophenolicus).